The sequence spans 122 residues: Selenoprotein H (122 aa).

K20 bears the N6-acetyllysine mark. Residues 41-44 (CTSU) constitute a cross-link (cysteinyl-selenocysteine (Cys-Sec); redox-active). Residue U44 is a non-standard amino acid, selenocysteine.

It belongs to the SelWTH family.

In terms of biological role, may be involved in a redox-related process. The protein is Selenoprotein H of Macaca fascicularis (Crab-eating macaque).